A 164-amino-acid chain; its full sequence is Lipoprotein signal peptidase (164 aa).

3 helical membrane-spanning segments follow: residues Trp-12–Gln-32, Trp-70–Ser-90, and Ala-102–Val-122. Residues Asp-123 and Asp-141 contribute to the active site. The helical transmembrane segment at Phe-137 to Leu-157 threads the bilayer.

This sequence belongs to the peptidase A8 family.

The protein resides in the cell inner membrane. It catalyses the reaction Release of signal peptides from bacterial membrane prolipoproteins. Hydrolyzes -Xaa-Yaa-Zaa-|-(S,diacylglyceryl)Cys-, in which Xaa is hydrophobic (preferably Leu), and Yaa (Ala or Ser) and Zaa (Gly or Ala) have small, neutral side chains.. It participates in protein modification; lipoprotein biosynthesis (signal peptide cleavage). Functionally, this protein specifically catalyzes the removal of signal peptides from prolipoproteins. The chain is Lipoprotein signal peptidase from Shigella sonnei (strain Ss046).